A 307-amino-acid polypeptide reads, in one-letter code: Homoserine kinase (307 aa).

Pro-91–Ala-101 provides a ligand contact to ATP.

It belongs to the GHMP kinase family. Homoserine kinase subfamily.

The protein localises to the cytoplasm. The enzyme catalyses L-homoserine + ATP = O-phospho-L-homoserine + ADP + H(+). Its pathway is amino-acid biosynthesis; L-threonine biosynthesis; L-threonine from L-aspartate: step 4/5. Catalyzes the ATP-dependent phosphorylation of L-homoserine to L-homoserine phosphate. The sequence is that of Homoserine kinase from Deinococcus radiodurans (strain ATCC 13939 / DSM 20539 / JCM 16871 / CCUG 27074 / LMG 4051 / NBRC 15346 / NCIMB 9279 / VKM B-1422 / R1).